A 150-amino-acid polypeptide reads, in one-letter code: uncharacterized protein (150 aa).

Residues Met-1–Gly-19 are compositionally biased toward low complexity. Disordered regions lie at residues Met-1 to Thr-21 and Glu-85 to Glu-131. The span at Arg-106–Val-115 shows a compositional bias: pro residues.

This is an uncharacterized protein from Schizosaccharomyces pombe (strain 972 / ATCC 24843) (Fission yeast).